The sequence spans 163 residues: NADH-quinone oxidoreductase subunit I (163 aa).

4Fe-4S ferredoxin-type domains lie at 53-83 and 94-123; these read LRRYPNGEERCIACKLCEAICPAQAITIEAG and VRYDIDMVKCIYCGFCQEACPVDAIVEGPN. Residues cysteine 63, cysteine 66, cysteine 69, cysteine 73, cysteine 103, cysteine 106, cysteine 109, and cysteine 113 each coordinate [4Fe-4S] cluster.

It belongs to the complex I 23 kDa subunit family. NDH-1 is composed of 14 different subunits. Subunits NuoA, H, J, K, L, M, N constitute the membrane sector of the complex. [4Fe-4S] cluster is required as a cofactor.

The protein resides in the cell inner membrane. It carries out the reaction a quinone + NADH + 5 H(+)(in) = a quinol + NAD(+) + 4 H(+)(out). In terms of biological role, NDH-1 shuttles electrons from NADH, via FMN and iron-sulfur (Fe-S) centers, to quinones in the respiratory chain. The immediate electron acceptor for the enzyme in this species is believed to be ubiquinone. Couples the redox reaction to proton translocation (for every two electrons transferred, four hydrogen ions are translocated across the cytoplasmic membrane), and thus conserves the redox energy in a proton gradient. The polypeptide is NADH-quinone oxidoreductase subunit I (Brucella anthropi (strain ATCC 49188 / DSM 6882 / CCUG 24695 / JCM 21032 / LMG 3331 / NBRC 15819 / NCTC 12168 / Alc 37) (Ochrobactrum anthropi)).